The primary structure comprises 301 residues: 2-methylisocitrate lyase (301 aa).

Residue 53–55 participates in substrate binding; that stretch reads SGA. Mg(2+) contacts are provided by aspartate 92 and aspartate 94. Substrate-binding positions include 129-130, arginine 162, glutamate 192, 214-216, arginine 245, and arginine 274; these read CG and NMT.

The protein belongs to the isocitrate lyase/PEP mutase superfamily. Methylisocitrate lyase family. Mg(2+) is required as a cofactor.

It carries out the reaction 3-hydroxybutane-1,2,3-tricarboxylate = pyruvate + succinate. Its function is as follows. Involved in the methylcitric acid cycle. Catalyzes the cleavage of 2-methylisocitrate to yield pyruvate and succinate. The chain is 2-methylisocitrate lyase from Bacillus subtilis (strain 168).